The primary structure comprises 692 residues: MPRTVPIQDLRNIGIVAHIDAGKTTTTERILYYTGKTYKIGEVHEGAATMDWMPQEKERGITITAATTACYWAGKQINIIDTPGHVDFSVEVVRSMRVLDGIIFIFSAVEGVQPQSEANWRWADKFNVARIAFINKLDRLGADFYRVYDEIVKKLTIKPVAIQIPIGTEDNFVGVVDLMNMNAIIWLEETLGAKYEIRDIPEEYKAKAQEWREKMVESIAETDDTLMEKYLEGQEISTDELKQALRKATINKQLVPVLCGSSFKNKGVQPLLDAVVDYLPSPLDVPSVVGINPKTVQEETRLPEDDQPFCAYIFKVVSDPYAGQLSYFRVFSGKVQAGSYVLNSTKDKKERVGRLLLMHANTREDITEVAAGEIAAAVGVDAATGDTICDEKSPIILEKLEFPEPVISMAIEPKTKKDQEKLSQVLNKFMKEDPTFKASMDPETGQTLIHGMGELHLEIMVDRMKREYNIEVNVGKPQVAYKEAIKGKAVAEGKFIRQTGGRGQYGHVVIEVEPLERGSGFVFENAIVGGVIPKEFIPPVEEGIKEAMENGVLAGYPVVDVKVKLFDGSYHEVDSSEIAFKIAGSMAFKEAAKKASVVLLEPIMEVEVETPDDYVGDVIGDLNSRRGKIMGMENKGIITSIKAHVPLSEMFGYATNLRSLTQGRGTFIMKFSHYSEAPQSITEKVVGERTHT.

The 276-residue stretch at 8–283 (QDLRNIGIVA…AVVDYLPSPL (276 aa)) folds into the tr-type G domain. GTP is bound by residues 17 to 24 (AHIDAGKT), 81 to 85 (DTPGH), and 135 to 138 (NKLD).

It belongs to the TRAFAC class translation factor GTPase superfamily. Classic translation factor GTPase family. EF-G/EF-2 subfamily.

It is found in the cytoplasm. Its function is as follows. Catalyzes the GTP-dependent ribosomal translocation step during translation elongation. During this step, the ribosome changes from the pre-translocational (PRE) to the post-translocational (POST) state as the newly formed A-site-bound peptidyl-tRNA and P-site-bound deacylated tRNA move to the P and E sites, respectively. Catalyzes the coordinated movement of the two tRNA molecules, the mRNA and conformational changes in the ribosome. The chain is Elongation factor G from Hydrogenobaculum sp. (strain Y04AAS1).